Consider the following 119-residue polypeptide: Protein TusC (119 aa).

This sequence belongs to the DsrF/TusC family. In terms of assembly, heterohexamer, formed by a dimer of trimers. The hexameric TusBCD complex contains 2 copies each of TusB, TusC and TusD. The TusBCD complex interacts with TusE.

It localises to the cytoplasm. In terms of biological role, part of a sulfur-relay system required for 2-thiolation of 5-methylaminomethyl-2-thiouridine (mnm(5)s(2)U) at tRNA wobble positions. The chain is Protein TusC from Escherichia coli O8 (strain IAI1).